A 217-amino-acid polypeptide reads, in one-letter code: MRGLGTESLRARGALKAAIAAVAGLAVLGLSVSACGTGGTGARDEGPAGSDSVAAGAATPTVSPSKAPKSVDAVKLVKDDPKVGAAVKRALKPCVADEYPVDVSYGDLTGGSADDIVVNVMTCGDAVGIGSYVYREQGHSYENVFRAEEPPVYAEIDRGELVVTQQMYEKDDPVSYPSSEEVITYSWSANRFSEESRTHTEYSNAVGGTDSATPAPN.

A signal peptide spans 1–34 (MRGLGTESLRARGALKAAIAAVAGLAVLGLSVSA). Cys-35 is lipidated: N-palmitoyl cysteine. The S-diacylglycerol cysteine moiety is linked to residue Cys-35. Disordered regions lie at residues 39 to 66 (GTGA…SPSK) and 192 to 217 (FSEE…PAPN).

It localises to the cell membrane. May be involved in the stabilization of the cell envelope or may interact with the sensor protein CseC to modulate its activity, in response to cell envelope stress. This is Lipoprotein CseA (cseA) from Streptomyces avermitilis (strain ATCC 31267 / DSM 46492 / JCM 5070 / NBRC 14893 / NCIMB 12804 / NRRL 8165 / MA-4680).